The following is a 381-amino-acid chain: Dual-specificity RNA methyltransferase RlmN (381 aa).

Glu95 acts as the Proton acceptor in catalysis. Residues 101 to 339 (DGRRGTLCVS…MTTVRTTRGD (239 aa)) enclose the Radical SAM core domain. A disulfide bridge connects residues Cys108 and Cys345. [4Fe-4S] cluster contacts are provided by Cys115, Cys119, and Cys122. Residues 169–170 (GE), Ser201, 223–225 (SLH), and Asn302 contribute to the S-adenosyl-L-methionine site. Cys345 functions as the S-methylcysteine intermediate in the catalytic mechanism.

It belongs to the radical SAM superfamily. RlmN family. Requires [4Fe-4S] cluster as cofactor.

The protein resides in the cytoplasm. The catalysed reaction is adenosine(2503) in 23S rRNA + 2 reduced [2Fe-2S]-[ferredoxin] + 2 S-adenosyl-L-methionine = 2-methyladenosine(2503) in 23S rRNA + 5'-deoxyadenosine + L-methionine + 2 oxidized [2Fe-2S]-[ferredoxin] + S-adenosyl-L-homocysteine. It catalyses the reaction adenosine(37) in tRNA + 2 reduced [2Fe-2S]-[ferredoxin] + 2 S-adenosyl-L-methionine = 2-methyladenosine(37) in tRNA + 5'-deoxyadenosine + L-methionine + 2 oxidized [2Fe-2S]-[ferredoxin] + S-adenosyl-L-homocysteine. Functionally, specifically methylates position 2 of adenine 2503 in 23S rRNA and position 2 of adenine 37 in tRNAs. m2A2503 modification seems to play a crucial role in the proofreading step occurring at the peptidyl transferase center and thus would serve to optimize ribosomal fidelity. This chain is Dual-specificity RNA methyltransferase RlmN, found in Alcanivorax borkumensis (strain ATCC 700651 / DSM 11573 / NCIMB 13689 / SK2).